A 61-amino-acid polypeptide reads, in one-letter code: Double gene block protein 1 (61 aa).

Residues 1-45 (MDIESEVPVVGKQMLAGNRGKQKTRRSVAKDAIRKPASDSTNGGN) are disordered. The tract at residues 17–35 (GNRGKQKTRRSVAKDAIRK) is RNA-binding. Residues 28–37 (VAKDAIRKPA) show a composition bias toward basic and acidic residues.

The protein belongs to the carmovirus double gene block protein 1 family. As to quaternary structure, homodimer.

Functionally, cell-to-cell movement. Displays RNA-binding activity. The protein is Double gene block protein 1 of Carnation mottle virus (CarMV).